We begin with the raw amino-acid sequence, 324 residues long: NADH-cytochrome b5 reductase 2 (324 aa).

The chain crosses the membrane as a helical span at residues Ile31–Tyr47. The 109-residue stretch at Gln70–Glu178 folds into the FAD-binding FR-type domain. Lys181 to Leu216 serves as a coordination point for FAD.

Belongs to the flavoprotein pyridine nucleotide cytochrome reductase family. The cofactor is FAD.

The protein localises to the mitochondrion outer membrane. The enzyme catalyses 2 Fe(III)-[cytochrome b5] + NADH = 2 Fe(II)-[cytochrome b5] + NAD(+) + H(+). Its function is as follows. May mediate the reduction of outer membrane cytochrome b5. In Ajellomyces capsulatus (strain NAm1 / WU24) (Darling's disease fungus), this protein is NADH-cytochrome b5 reductase 2 (MCR1).